A 1401-amino-acid polypeptide reads, in one-letter code: Condensin complex subunit 1 (1401 aa).

The interactions with SMC2 and SMC4 stretch occupies residues 1 to 603; sequence MAPQMYEFHL…TVCKNKPNMS (603 aa). S20 and S585 each carry phosphoserine. Over residues 576–596 the composition is skewed to polar residues; that stretch reads STQEKNPRESTGNMVTGQTVC. Disordered regions lie at residues 576 to 611, 956 to 978, and 1303 to 1401; these read STQE…SRGN, REEQ…TTME, and LEIG…RHRS. Residues 956 to 971 show a composition bias toward basic and acidic residues; that stretch reads REEQEHKTKDPKEKNT. Over residues 1308 to 1336 the composition is skewed to polar residues; sequence AGSQRAPSAKKPSTGSRYQPLASTASDND. A phosphoserine mark is found at S1310, S1315, and S1330. T1331 bears the Phosphothreonine mark. Phosphoserine is present on S1333. Phosphothreonine is present on T1339. The Bipartite nuclear localization signal motif lies at 1342-1362; that stretch reads PRRTTRRHPNTQQRASKKKPK. Residues 1345-1362 show a composition bias toward basic residues; that stretch reads TTRRHPNTQQRASKKKPK. Phosphoserine is present on residues S1366, S1367, S1370, S1371, and S1376. Residues 1369–1382 show a composition bias toward acidic residues; that stretch reads ESSEEDLSAEMTED. Phosphothreonine; by CDK1 occurs at positions 1384 and 1389. The residue at position 1395 (S1395) is a Phosphoserine.

It belongs to the CND1 (condensin subunit 1) family. As to quaternary structure, component of the condensin complex, which contains the SMC2 and SMC4 heterodimer, and three non SMC subunits that probably regulate the complex: NCAPH/BRRN1, NCAPD2/CAPD2 and NCAPG. Interacts with histones H1 and H3. Post-translationally, phosphorylated by CDK1. Its phosphorylation, as well as that of NCAPH and NCAPG subunits, activates the condensin complex and is required for chromosome condensation.

It localises to the nucleus. It is found in the cytoplasm. The protein localises to the chromosome. Functionally, regulatory subunit of the condensin complex, a complex required for conversion of interphase chromatin into mitotic-like condense chromosomes. The condensin complex probably introduces positive supercoils into relaxed DNA in the presence of type I topoisomerases and converts nicked DNA into positive knotted forms in the presence of type II topoisomerases. May target the condensin complex to DNA via its C-terminal domain. May promote the resolution of double-strand DNA catenanes (intertwines) between sister chromatids. Condensin-mediated compaction likely increases tension in catenated sister chromatids, providing directionality for type II topoisomerase-mediated strand exchanges toward chromatid decatenation. Required for decatenation of non-centromeric ultrafine DNA bridges during anaphase. Early in neurogenesis, may play an essential role to ensure accurate mitotic chromosome condensation in neuron stem cells, ultimately affecting neuron pool and cortex size. The chain is Condensin complex subunit 1 from Homo sapiens (Human).